Reading from the N-terminus, the 1275-residue chain is Serine/threonine-protein kinase ULK4 (1275 aa).

One can recognise a Protein kinase domain in the interval 4-280 (FILYEEIGRG…WTRLLQHSFW (277 aa)). Residue aspartate 121 is the Proton acceptor of the active site. Disordered stretches follow at residues 299-346 (SRNT…EFRP) and 359-393 (FLLS…SPLT). A compositionally biased stretch (basic and acidic residues) spans 336–346 (FRLENPTEFRP). Composition is skewed to polar residues over residues 363–373 (SRPTPRTSTAV) and 384–393 (CSPQKTSPLT). HEAT repeat units lie at residues 727–765 (LIQE…YNRE), 842–880 (LKMC…ILSH), 926–964 (STVV…LLVN), 1025–1063 (LVEE…NLVA), 1151–1189 (NRPL…LYGG), and 1213–1253 (PKEQ…LAPG).

It belongs to the protein kinase superfamily. Ser/Thr protein kinase family. APG1/unc-51/ULK1 subfamily.

It carries out the reaction L-seryl-[protein] + ATP = O-phospho-L-seryl-[protein] + ADP + H(+). It catalyses the reaction L-threonyl-[protein] + ATP = O-phospho-L-threonyl-[protein] + ADP + H(+). In terms of biological role, may be involved in the remodeling of cytoskeletal components, such as alpha-tubulin, and in this way regulates neurite branching and elongation, as well as cell motility. The sequence is that of Serine/threonine-protein kinase ULK4 (ULK4) from Pongo abelii (Sumatran orangutan).